Consider the following 73-residue polypeptide: Small ribosomal subunit protein bS18 (73 aa).

Belongs to the bacterial ribosomal protein bS18 family. As to quaternary structure, part of the 30S ribosomal subunit. Forms a tight heterodimer with protein bS6.

In terms of biological role, binds as a heterodimer with protein bS6 to the central domain of the 16S rRNA, where it helps stabilize the platform of the 30S subunit. The chain is Small ribosomal subunit protein bS18 from Synechococcus sp. (strain WH7803).